The primary structure comprises 229 residues: uncharacterized protein (229 aa).

7 helical membrane-spanning segments follow: residues 21–41 (IYSL…LMLY), 56–76 (MIYY…SGAA), 83–103 (ALPI…FIIV), 109–129 (TVFQ…IIGV), 141–161 (AMFA…FIGS), 162–182 (GMMS…LIAS), and 202–222 (WAVA…ISLL).

This sequence belongs to the BI1 family.

Its subcellular location is the cell membrane. This is an uncharacterized protein from Streptococcus pyogenes serotype M3 (strain ATCC BAA-595 / MGAS315).